Here is a 173-residue protein sequence, read N- to C-terminus: Small ribosomal subunit protein mS25 (173 aa).

Belongs to the mitochondrion-specific ribosomal protein mS25 family. As to quaternary structure, component of the mitochondrial ribosome small subunit (28S) which comprises a 12S rRNA and about 30 distinct proteins.

The protein resides in the mitochondrion. The polypeptide is Small ribosomal subunit protein mS25 (MRPS25) (Bos taurus (Bovine)).